The primary structure comprises 466 residues: 3-isopropylmalate dehydratase large subunit (466 aa).

[4Fe-4S] cluster-binding residues include Cys347, Cys407, and Cys410.

The protein belongs to the aconitase/IPM isomerase family. LeuC type 1 subfamily. Heterodimer of LeuC and LeuD. [4Fe-4S] cluster is required as a cofactor.

The enzyme catalyses (2R,3S)-3-isopropylmalate = (2S)-2-isopropylmalate. Its pathway is amino-acid biosynthesis; L-leucine biosynthesis; L-leucine from 3-methyl-2-oxobutanoate: step 2/4. In terms of biological role, catalyzes the isomerization between 2-isopropylmalate and 3-isopropylmalate, via the formation of 2-isopropylmaleate. The chain is 3-isopropylmalate dehydratase large subunit from Blochmanniella floridana.